Reading from the N-terminus, the 102-residue chain is Small ribosomal subunit protein uS10 (102 aa).

This sequence belongs to the universal ribosomal protein uS10 family. As to quaternary structure, part of the 30S ribosomal subunit.

Involved in the binding of tRNA to the ribosomes. The chain is Small ribosomal subunit protein uS10 from Methanothrix thermoacetophila (strain DSM 6194 / JCM 14653 / NBRC 101360 / PT) (Methanosaeta thermophila).